The primary structure comprises 486 residues: uncharacterized protein (486 aa).

Positions 1-25 are cleaved as a signal peptide; the sequence is MGTMRSVYLIIIIILFFAFISLSFG. Composition is skewed to basic and acidic residues over residues 306–316 and 326–349; these read KKEEKENEESS and KKEE…KQEK. Positions 306 to 349 are disordered; the sequence is KKEEKENEESSKTINQMQRHKKEEKSQTQETKKPSKNEMNKQEK.

This is an uncharacterized protein from Methanocaldococcus jannaschii (strain ATCC 43067 / DSM 2661 / JAL-1 / JCM 10045 / NBRC 100440) (Methanococcus jannaschii).